A 630-amino-acid chain; its full sequence is Elongation factor 4 (630 aa).

Residues 1–22 (MTVARNRAGAGPGKGSPISSFA) form a disordered region. The tr-type G domain maps to 30–211 (ARIRNFCIIA…EVVRQVPAPV (182 aa)). GTP-binding positions include 42–47 (DHGKST) and 158–161 (NKID).

Belongs to the TRAFAC class translation factor GTPase superfamily. Classic translation factor GTPase family. LepA subfamily.

The protein resides in the cell membrane. The catalysed reaction is GTP + H2O = GDP + phosphate + H(+). In terms of biological role, required for accurate and efficient protein synthesis under certain stress conditions. May act as a fidelity factor of the translation reaction, by catalyzing a one-codon backward translocation of tRNAs on improperly translocated ribosomes. Back-translocation proceeds from a post-translocation (POST) complex to a pre-translocation (PRE) complex, thus giving elongation factor G a second chance to translocate the tRNAs correctly. Binds to ribosomes in a GTP-dependent manner. The chain is Elongation factor 4 from Rhodococcus jostii (strain RHA1).